Here is a 531-residue protein sequence, read N- to C-terminus: Acetate CoA-transferase YdiF (531 aa).

Glu333 serves as the catalytic 5-glutamyl coenzyme A thioester intermediate.

The protein belongs to the 3-oxoacid CoA-transferase family. Homotetramer; dimer of dimers.

The enzyme catalyses an acyl-CoA + acetate = a carboxylate + acetyl-CoA. Functionally, coA transferase having broad substrate specificity for short-chain acyl-CoA thioesters with the activity decreasing when the length of the carboxylic acid chain exceeds four carbons. Exhibits high activity with acetoacetyl-CoA, propionyl-CoA, crotonoyl-CoA or butyryl-CoA as donors, with acetate as an acceptor. When acetyl-CoA is used as the donor, propionate, acetoacetate, butyrate, isobutyrate, and 4-hydroxybutyrate can be utilized as acceptors but not isovalerate. May play a role in short-chain fatty acid metabolism in E.coli. The sequence is that of Acetate CoA-transferase YdiF from Escherichia coli O157:H7.